The following is a 234-amino-acid chain: Leucyl/phenylalanyl-tRNA--protein transferase (234 aa).

The protein belongs to the L/F-transferase family.

It localises to the cytoplasm. It carries out the reaction N-terminal L-lysyl-[protein] + L-leucyl-tRNA(Leu) = N-terminal L-leucyl-L-lysyl-[protein] + tRNA(Leu) + H(+). It catalyses the reaction N-terminal L-arginyl-[protein] + L-leucyl-tRNA(Leu) = N-terminal L-leucyl-L-arginyl-[protein] + tRNA(Leu) + H(+). The catalysed reaction is L-phenylalanyl-tRNA(Phe) + an N-terminal L-alpha-aminoacyl-[protein] = an N-terminal L-phenylalanyl-L-alpha-aminoacyl-[protein] + tRNA(Phe). In terms of biological role, functions in the N-end rule pathway of protein degradation where it conjugates Leu, Phe and, less efficiently, Met from aminoacyl-tRNAs to the N-termini of proteins containing an N-terminal arginine or lysine. The sequence is that of Leucyl/phenylalanyl-tRNA--protein transferase from Salmonella arizonae (strain ATCC BAA-731 / CDC346-86 / RSK2980).